Consider the following 467-residue polypeptide: Inactive pancreatic lipase-related protein 1 (467 aa).

An N-terminal signal peptide occupies residues 1 to 17 (MVSIWTIALFLLGAAKA). 2 disulfides stabilise this stretch: C21–C27 and C109–C120. A glycan (N-linked (GlcNAc...) asparagine) is linked at N157. S171 acts as the Nucleophile in catalysis. D194 serves as the catalytic Charge relay system. E205, R208, D210, and D213 together coordinate Ca(2+). The cysteines at positions 255 and 279 are disulfide-linked. H281 functions as the Charge relay system in the catalytic mechanism. 3 disulfide bridges follow: C303/C314, C317/C322, and C451/C467. A PLAT domain is found at 356-467 (WRYGVSITLS…EDVLLTLTPC (112 aa)).

The protein belongs to the AB hydrolase superfamily. Lipase family. As to expression, detected in pancreas (at protein level).

The protein localises to the secreted. Its function is as follows. May function as inhibitor of dietary triglyceride digestion. Lacks detectable lipase activity towards triglycerides, diglycerides, phosphatidylcholine, galactolipids or cholesterol esters (in vitro). This chain is Inactive pancreatic lipase-related protein 1 (PNLIPRP1), found in Canis lupus familiaris (Dog).